We begin with the raw amino-acid sequence, 324 residues long: Myb-like DNA-binding protein myb-1 (324 aa).

HTH myb-type domains follow at residues 4 to 59 and 60 to 110; these read MPDQ…KPGL and NHGP…NRKK. Positions 107 to 231 are disordered; that stretch reads NRKKNQLRRQ…PTGSTLRLLT (125 aa). Polar residues predominate over residues 155-165; it reads RRPSSPSSFND. Basic and acidic residues predominate over residues 166-175; that stretch reads SLHHRVHESI. 2 stretches are compositionally biased toward low complexity: residues 183-192 and 222-231; these read QQQQQQQQQQ and PTGSTLRLLT.

It is found in the nucleus. This is Myb-like DNA-binding protein myb-1 (rca-1) from Neurospora crassa (strain ATCC 24698 / 74-OR23-1A / CBS 708.71 / DSM 1257 / FGSC 987).